The chain runs to 304 residues: Non-specific ribonucleoside hydrolase RihC (304 aa).

Residue histidine 233 is part of the active site.

Belongs to the IUNH family. RihC subfamily.

In terms of biological role, hydrolyzes both purine and pyrimidine ribonucleosides with a broad-substrate specificity. The sequence is that of Non-specific ribonucleoside hydrolase RihC from Escherichia coli O139:H28 (strain E24377A / ETEC).